The chain runs to 585 residues: A-type ATP synthase subunit A (585 aa).

231–238 (GPFGSGKT) contacts ATP.

Belongs to the ATPase alpha/beta chains family. In terms of assembly, has multiple subunits with at least A(3), B(3), C, D, E, F, H, I and proteolipid K(x).

The protein localises to the cell membrane. The enzyme catalyses ATP + H2O + 4 H(+)(in) = ADP + phosphate + 5 H(+)(out). Produces ATP from ADP in the presence of a proton gradient across the membrane. The archaeal alpha chain is a catalytic subunit. Functionally, component of the A-type ATP synthase that produces ATP from ADP in the presence of a proton gradient across the membrane. The A chain is the catalytic subunit. The sequence is that of A-type ATP synthase subunit A from Thermococcus kodakarensis (strain ATCC BAA-918 / JCM 12380 / KOD1) (Pyrococcus kodakaraensis (strain KOD1)).